The sequence spans 315 residues: Olfactory receptor 2V1 (315 aa).

A run of 7 helical transmembrane segments spans residues 31-51 (TVMLVFTVALCGNVLLILLIY), 59-79 (PMYFFLSQLSLMDLMLVCNIV), 100-120 (IQIGFFVSLVGSEGLLLGLMA), 145-165 (IAGSSWAFGILDGIIQMVAAM), 196-216 (FDTLLFACCVFMLLLPFSIIV), 239-259 (LATCSSHLTAVSLFYGAAMFI), and 273-293 (KVVSIFYTVLTPMLNPLIYSL). Cysteine 98 and cysteine 180 are oxidised to a cystine.

The protein belongs to the G-protein coupled receptor 1 family.

Its subcellular location is the cell membrane. In terms of biological role, odorant receptor. Activated by (+) and (-)-limonene. The protein is Olfactory receptor 2V1 of Mus musculus (Mouse).